The following is a 427-amino-acid chain: Glutamate-1-semialdehyde 2,1-aminomutase (427 aa).

Lysine 265 is modified (N6-(pyridoxal phosphate)lysine).

This sequence belongs to the class-III pyridoxal-phosphate-dependent aminotransferase family. HemL subfamily. Homodimer. It depends on pyridoxal 5'-phosphate as a cofactor.

It localises to the cytoplasm. It catalyses the reaction (S)-4-amino-5-oxopentanoate = 5-aminolevulinate. It participates in porphyrin-containing compound metabolism; protoporphyrin-IX biosynthesis; 5-aminolevulinate from L-glutamyl-tRNA(Glu): step 2/2. The polypeptide is Glutamate-1-semialdehyde 2,1-aminomutase (Pseudomonas savastanoi pv. phaseolicola (strain 1448A / Race 6) (Pseudomonas syringae pv. phaseolicola (strain 1448A / Race 6))).